The following is a 698-amino-acid chain: Elongation factor G 1 (698 aa).

The tr-type G domain occupies 8–290 (ERYRNIGICA…AVVEFLPAPV (283 aa)). GTP-binding positions include 17 to 24 (AHVDAGKT), 88 to 92 (DTPGH), and 142 to 145 (NKMD).

It belongs to the TRAFAC class translation factor GTPase superfamily. Classic translation factor GTPase family. EF-G/EF-2 subfamily.

The protein resides in the cytoplasm. Its function is as follows. Catalyzes the GTP-dependent ribosomal translocation step during translation elongation. During this step, the ribosome changes from the pre-translocational (PRE) to the post-translocational (POST) state as the newly formed A-site-bound peptidyl-tRNA and P-site-bound deacylated tRNA move to the P and E sites, respectively. Catalyzes the coordinated movement of the two tRNA molecules, the mRNA and conformational changes in the ribosome. This chain is Elongation factor G 1, found in Shewanella sp. (strain MR-4).